Here is a 537-residue protein sequence, read N- to C-terminus: CTP synthase (537 aa).

Positions 1–265 are amidoligase domain; it reads MTKFIFVTGG…GKYLVKRLGL (265 aa). S13 serves as a coordination point for CTP. S13 provides a ligand contact to UTP. ATP is bound at residue 14–19; the sequence is GLGKGI. Y54 contributes to the L-glutamine binding site. D71 provides a ligand contact to ATP. Mg(2+) is bound by residues D71 and E139. CTP contacts are provided by residues 146-148, 186-191, and K222; these read DIE and KTKPTQ. Residues 186-191 and K222 contribute to the UTP site; that span reads KTKPTQ. Residues 290-532 form the Glutamine amidotransferase type-1 domain; it reads EIAIVGKYVK…VKAAKEYKQE (243 aa). G351 is an L-glutamine binding site. C378 (nucleophile; for glutamine hydrolysis) is an active-site residue. L-glutamine-binding positions include 379–382, E402, and R459; that span reads FGFQ. Catalysis depends on residues H505 and E507.

The protein belongs to the CTP synthase family. Homotetramer.

The enzyme catalyses UTP + L-glutamine + ATP + H2O = CTP + L-glutamate + ADP + phosphate + 2 H(+). It catalyses the reaction L-glutamine + H2O = L-glutamate + NH4(+). The catalysed reaction is UTP + NH4(+) + ATP = CTP + ADP + phosphate + 2 H(+). Its pathway is pyrimidine metabolism; CTP biosynthesis via de novo pathway; CTP from UDP: step 2/2. Its activity is regulated as follows. Allosterically activated by GTP, when glutamine is the substrate; GTP has no effect on the reaction when ammonia is the substrate. The allosteric effector GTP functions by stabilizing the protein conformation that binds the tetrahedral intermediate(s) formed during glutamine hydrolysis. Inhibited by the product CTP, via allosteric rather than competitive inhibition. Its function is as follows. Catalyzes the ATP-dependent amination of UTP to CTP with either L-glutamine or ammonia as the source of nitrogen. Regulates intracellular CTP levels through interactions with the four ribonucleotide triphosphates. This Pyrococcus abyssi (strain GE5 / Orsay) protein is CTP synthase.